We begin with the raw amino-acid sequence, 147 residues long: Deoxyuridine 5'-triphosphate nucleotidohydrolase (147 aa).

DUMP-binding residues include S69, G82, D85, Y88, K93, R137, F142, and G143.

Belongs to the dUTPase family. As to quaternary structure, homotrimer. It depends on Mg(2+) as a cofactor.

The catalysed reaction is dUTP + H2O = dUMP + diphosphate + H(+). It functions in the pathway pyrimidine metabolism; dUMP biosynthesis; dUMP from dCTP (dUTP route): step 2/2. Its function is as follows. Involved in nucleotide metabolism via production of dUMP, the immediate precursor of thymidine nucleotides, and decreases the intracellular concentration of dUTP so that uracil cannot be incorporated into DNA. Shows a significant activity against dITP, another potentially mutagenic nucleotide. The protein is Deoxyuridine 5'-triphosphate nucleotidohydrolase of Saccharomyces cerevisiae (strain ATCC 204508 / S288c) (Baker's yeast).